The primary structure comprises 514 residues: Variant surface glycoprotein ILTAT 1.24 (514 aa).

Positions 1 to 23 are cleaved as a signal peptide; the sequence is MVYRNILQLSVLKVLLIVLIVEA. Disulfide bonds link C37-C162 and C143-C204. N443 carries an N-linked (GlcNAc...) asparagine glycan. The disordered stretch occupies residues 451-476; sequence GVPVTQTQTAGADTTAEKCKGKGEKD. A compositionally biased stretch (low complexity) spans 455–464; that stretch reads TQTQTAGADT. The span at 465–476 shows a compositional bias: basic and acidic residues; it reads TAEKCKGKGEKD. D491 is lipidated: GPI-anchor amidated aspartate. A propeptide spans 492–514 (removed in mature form); sequence SSILANKQFALSVASAAFVALLF.

Its subcellular location is the cell membrane. Functionally, VSG forms a coat on the surface of the parasite. The trypanosome evades the immune response of the host by expressing a series of antigenically distinct VSGs from an estimated 1000 VSG genes. This chain is Variant surface glycoprotein ILTAT 1.24, found in Trypanosoma brucei brucei.